Reading from the N-terminus, the 260-residue chain is Thrombin-like enzyme bhalternin (260 aa).

The N-terminal stretch at 1 to 18 is a signal peptide; that stretch reads MVLIRVLANLLILQLSYA. A propeptide spanning residues 19-24 is cleaved from the precursor; it reads QKASEL. The Peptidase S1 domain maps to 25 to 251; it reads VIGGDECNIN…YSEWIQSIIA (227 aa). Disulfide bonds link cysteine 31-cysteine 165, cysteine 50-cysteine 66, cysteine 144-cysteine 212, cysteine 176-cysteine 191, and cysteine 202-cysteine 227. N-linked (GlcNAc...) asparagine glycosylation occurs at asparagine 44. An N-linked (GlcNAc...) asparagine glycan is attached at asparagine 81.

This sequence belongs to the peptidase S1 family. Snake venom subfamily. Monomer. Expressed by the venom gland.

Its subcellular location is the secreted. With respect to regulation, inhibited by benzamidine and partially inhibited by EDTA. In terms of biological role, thrombin-like snake venom serine protease that induces blood clotting in vitro, defibrinogenation in vivo (by intraperitoneal injection into mice), albuminolytic and fibrinogenolytic activities. Preferentially cleaves the alpha chain of fibrinogen (FGA). Causes hemolysis in the heart, causes apparent hyperemia and lymphocytic interstitial pneumonitis in the lung, causes necrosis and inflammatory infiltrate in the liver, and causes glomerular congestion in the kidney. Also provokes a drastic myonecrosis. The chain is Thrombin-like enzyme bhalternin from Bothrops alternatus (Urutu).